Consider the following 205-residue polypeptide: Guanylate kinase (205 aa).

Residues 5-184 form the Guanylate kinase-like domain; sequence GLLIVLSGPS…AVQKIKGIVE (180 aa). 12 to 19 contributes to the ATP binding site; sequence GPSGVGKG.

This sequence belongs to the guanylate kinase family.

It is found in the cytoplasm. The enzyme catalyses GMP + ATP = GDP + ADP. Its function is as follows. Essential for recycling GMP and indirectly, cGMP. This Listeria monocytogenes serotype 4b (strain F2365) protein is Guanylate kinase.